An 87-amino-acid chain; its full sequence is Translation initiation factor IF-1 2 (87 aa).

Residues 1–72 (MAKEELLELD…TKGRINFRHK (72 aa)) enclose the S1-like domain. Positions 68-87 (NFRHKDANSPRPPRSGQPRR) are disordered. The segment covering 77–87 (PRPPRSGQPRR) has biased composition (pro residues).

The protein belongs to the IF-1 family. Component of the 30S ribosomal translation pre-initiation complex which assembles on the 30S ribosome in the order IF-2 and IF-3, IF-1 and N-formylmethionyl-tRNA(fMet); mRNA recruitment can occur at any time during PIC assembly.

Its subcellular location is the cytoplasm. One of the essential components for the initiation of protein synthesis. Stabilizes the binding of IF-2 and IF-3 on the 30S subunit to which N-formylmethionyl-tRNA(fMet) subsequently binds. Helps modulate mRNA selection, yielding the 30S pre-initiation complex (PIC). Upon addition of the 50S ribosomal subunit IF-1, IF-2 and IF-3 are released leaving the mature 70S translation initiation complex. The protein is Translation initiation factor IF-1 2 of Burkholderia cenocepacia (strain HI2424).